The following is a 117-amino-acid chain: Big defensin (117 aa).

An N-terminal signal peptide occupies residues 1–23 (MEKKTAYCLLFLVLLVPYTALGA). A propeptide spanning residues 24 to 33 (VLKRAPAKKE) is cleaved from the precursor. 3 disulfides stabilise this stretch: cysteine 82–cysteine 112, cysteine 89–cysteine 107, and cysteine 93–cysteine 113.

This sequence belongs to the big defensin family.

The protein localises to the secreted. In terms of biological role, significantly inhibits the growth of Gram-negative and Gram-positive bacteria and fungi in vitro. This Branchiostoma belcheri (Amphioxus) protein is Big defensin.